A 374-amino-acid chain; its full sequence is Calcium/calmodulin-dependent protein kinase type 1 (374 aa).

The 257-residue stretch at 20–276 folds into the Protein kinase domain; sequence YDFRDVLGTG…CEQALQHPWI (257 aa). ATP contacts are provided by residues 26-34 and Lys-49; that span reads LGTGAFSEV. Lys-59 participates in a covalent cross-link: Glycyl lysine isopeptide (Lys-Gly) (interchain with G-Cter in ubiquitin). The active-site Proton acceptor is the Asp-141. The residue at position 177 (Thr-177) is a Phosphothreonine; by CaMKK1 and CaMKK2. The tract at residues 276 to 316 is autoinhibitory domain; that stretch reads IAGDTALDKNIHQSVSEQIKKNFAKSKWKQAFNATAVVRHM. A calmodulin-binding region spans residues 296–317; the sequence is KNFAKSKWKQAFNATAVVRHMR. A Nuclear export signal motif is present at residues 315–321; the sequence is HMRKLQL.

The protein belongs to the protein kinase superfamily. CAMK Ser/Thr protein kinase family. CaMK subfamily. As to quaternary structure, monomer. Interacts with XPO1. In terms of processing, phosphorylated by CaMKK1 and CaMKK2 on Thr-177. Post-translationally, polybiquitinated by the E3 ubiquitin-protein ligase complex SCF(FBXL12), leading to proteasomal degradation. Ubiquitous.

It localises to the cytoplasm. It is found in the nucleus. It catalyses the reaction L-seryl-[protein] + ATP = O-phospho-L-seryl-[protein] + ADP + H(+). It carries out the reaction L-threonyl-[protein] + ATP = O-phospho-L-threonyl-[protein] + ADP + H(+). With respect to regulation, activated by Ca(2+)/calmodulin. Binding of calmodulin results in conformational change that relieves intrasteric autoinhibition and allows phosphorylation of Thr-177 within the activation loop by CaMKK1 or CaMKK2. Phosphorylation of Thr-177 results in several fold increase in total activity. Unlike CaMK4, is unable to exhibit autonomous activity after Ca(2+)/calmodulin activation. In terms of biological role, calcium/calmodulin-dependent protein kinase that operates in the calcium-triggered CaMKK-CaMK1 signaling cascade and, upon calcium influx, regulates transcription activators activity, cell cycle, hormone production, cell differentiation, actin filament organization and neurite outgrowth. Recognizes the substrate consensus sequence [MVLIF]-x-R-x(2)-[ST]-x(3)-[MVLIF]. Regulates axonal extension and growth cone motility in hippocampal and cerebellar nerve cells. Upon NMDA receptor-mediated Ca(2+) elevation, promotes dendritic growth in hippocampal neurons and is essential in synapses for full long-term potentiation (LTP) and ERK2-dependent translational activation. Downstream of NMDA receptors, promotes the formation of spines and synapses in hippocampal neurons by phosphorylating ARHGEF7/BETAPIX on 'Ser-673', which results in the enhancement of ARHGEF7 activity and activation of RAC1. Promotes neuronal differentiation and neurite outgrowth by activation and phosphorylation of MARK2 on 'Ser-91', 'Ser-92', 'Ser-93' and 'Ser-294'. Promotes nuclear export of HDAC5 and binding to 14-3-3 by phosphorylation of 'Ser-259' and 'Ser-498' in the regulation of muscle cell differentiation. Regulates NUMB-mediated endocytosis by phosphorylation of NUMB on 'Ser-276' and 'Ser-295'. Involved in the regulation of basal and estrogen-stimulated migration of medulloblastoma cells through ARHGEF7/BETAPIX phosphorylation. Is required for proper activation of cyclin-D1/CDK4 complex during G1 progression in diploid fibroblasts. Plays a role in K(+) and ANG2-mediated regulation of the aldosterone synthase (CYP11B2) to produce aldosterone in the adrenal cortex. Phosphorylates EIF4G3/eIF4GII. In vitro phosphorylates CREB1, ATF1, CFTR, MYL9 and SYN1/synapsin I. This chain is Calcium/calmodulin-dependent protein kinase type 1 (Camk1), found in Mus musculus (Mouse).